We begin with the raw amino-acid sequence, 160 residues long: Ureidoglycolate lyase (160 aa).

It belongs to the ureidoglycolate lyase family. In terms of assembly, homodimer. The cofactor is Ni(2+).

It catalyses the reaction (S)-ureidoglycolate = urea + glyoxylate. It functions in the pathway nitrogen metabolism; (S)-allantoin degradation. Functionally, catalyzes the catabolism of the allantoin degradation intermediate (S)-ureidoglycolate, generating urea and glyoxylate. Involved in the anaerobic utilization of allantoin as sole nitrogen source. Reinforces the induction of genes involved in the degradation of allantoin and glyoxylate by producing glyoxylate. The protein is Ureidoglycolate lyase of Escherichia coli (strain K12 / MC4100 / BW2952).